Consider the following 185-residue polypeptide: MKVFGKWDASEVEIPDLSVKGYINLKPRIVLHTGGRHAKQQFKKSELHVVERLINKMMRKEKNTGQKQIAYRIVEEAFDIIHSRTKENPLSVLVRAISNAGPREEVVRLKYGGITVPKAVDTAPQRRVDTALMLIAKGAWQASFKSRRSIQNCLADEIIAAANYDVKSFAVSRKDSIERVAKAAR.

It belongs to the universal ribosomal protein uS7 family. As to quaternary structure, part of the 30S ribosomal subunit.

Functionally, one of the primary rRNA binding proteins, it binds directly to 16S rRNA where it nucleates assembly of the head domain of the 30S subunit. Is located at the subunit interface close to the decoding center. In Methanothrix thermoacetophila (strain DSM 6194 / JCM 14653 / NBRC 101360 / PT) (Methanosaeta thermophila), this protein is Small ribosomal subunit protein uS7.